Consider the following 182-residue polypeptide: ATP synthase subunit delta (182 aa).

This sequence belongs to the ATPase delta chain family. In terms of assembly, F-type ATPases have 2 components, F(1) - the catalytic core - and F(0) - the membrane proton channel. F(1) has five subunits: alpha(3), beta(3), gamma(1), delta(1), epsilon(1). CF(0) has four main subunits: a(1), b(1), b'(1) and c(10-14). The alpha and beta chains form an alternating ring which encloses part of the gamma chain. F(1) is attached to F(0) by a central stalk formed by the gamma and epsilon chains, while a peripheral stalk is formed by the delta, b and b' chains.

The protein resides in the cellular thylakoid membrane. Its function is as follows. F(1)F(0) ATP synthase produces ATP from ADP in the presence of a proton or sodium gradient. F-type ATPases consist of two structural domains, F(1) containing the extramembraneous catalytic core and F(0) containing the membrane proton channel, linked together by a central stalk and a peripheral stalk. During catalysis, ATP synthesis in the catalytic domain of F(1) is coupled via a rotary mechanism of the central stalk subunits to proton translocation. Functionally, this protein is part of the stalk that links CF(0) to CF(1). It either transmits conformational changes from CF(0) to CF(1) or is implicated in proton conduction. This chain is ATP synthase subunit delta, found in Prochlorococcus marinus (strain NATL1A).